A 143-amino-acid chain; its full sequence is Root meristem growth factor 10 (143 aa).

Positions 1–27 (MDMLRSACFYFLLIVFVILSWSLLCDS) are cleaved as a signal peptide. Positions 28–130 (RHLGHMEKKL…SDQEHPGFNL (103 aa)) are excised as a propeptide. A glycan (N-linked (GlcNAc...) asparagine) is linked at asparagine 60. A compositionally biased stretch (polar residues) spans 74-83 (NHGDNGQING). The interval 74 to 143 (NHGDNGQING…QPTTHPPHHN (70 aa)) is disordered. The Nuclear localization signal motif lies at 92 to 99 (VKRASDKK). Sulfotyrosine is present on tyrosine 132. Proline 140 bears the Hydroxyproline mark.

This sequence belongs to the RGF family. In terms of assembly, binds to LRR receptor-like serine/threonine-protein kinases RGI1, RGI2 and RGI3 to trigger their dimerization with SERK proteins and subsequent signaling. Post-translationally, the tyrosine sulfation is critical for the function of the peptide. As to expression, expressed in root tips.

The protein resides in the secreted. The protein localises to the nucleus. Its function is as follows. Maintains the postembryonic root stem cell niche by regulating the expression levels and patterns of the transcription factor PLETHORA (PLT), mainly at the post-transcriptional level. Promotes root elongation. The polypeptide is Root meristem growth factor 10 (Arabidopsis thaliana (Mouse-ear cress)).